The primary structure comprises 349 residues: UDP-N-acetylenolpyruvoylglucosamine reductase (349 aa).

Positions 25-213 constitute an FAD-binding PCMH-type domain; that stretch reads VGPVARRLVT…VEQGERTDPQ (189 aa). Arg165 is an active-site residue. Catalysis depends on Ser242, which acts as the Proton donor. The active site involves Glu341.

Belongs to the MurB family. FAD serves as cofactor.

It is found in the cytoplasm. It catalyses the reaction UDP-N-acetyl-alpha-D-muramate + NADP(+) = UDP-N-acetyl-3-O-(1-carboxyvinyl)-alpha-D-glucosamine + NADPH + H(+). The protein operates within cell wall biogenesis; peptidoglycan biosynthesis. Its function is as follows. Cell wall formation. This chain is UDP-N-acetylenolpyruvoylglucosamine reductase, found in Mycolicibacterium gilvum (strain PYR-GCK) (Mycobacterium gilvum (strain PYR-GCK)).